The sequence spans 282 residues: Biotin synthase (282 aa).

The Radical SAM core domain occupies 1–228; the sequence is MQEIFLCSIS…NARLMVAGGR (228 aa). Positions 17, 21, and 24 each coordinate [4Fe-4S] cluster. The [2Fe-2S] cluster site is built by Cys-61, Cys-96, Cys-154, and Arg-221.

It belongs to the radical SAM superfamily. Biotin synthase family. As to quaternary structure, homodimer. [4Fe-4S] cluster is required as a cofactor. It depends on [2Fe-2S] cluster as a cofactor.

The enzyme catalyses (4R,5S)-dethiobiotin + (sulfur carrier)-SH + 2 reduced [2Fe-2S]-[ferredoxin] + 2 S-adenosyl-L-methionine = (sulfur carrier)-H + biotin + 2 5'-deoxyadenosine + 2 L-methionine + 2 oxidized [2Fe-2S]-[ferredoxin]. Its pathway is cofactor biosynthesis; biotin biosynthesis; biotin from 7,8-diaminononanoate: step 2/2. Functionally, catalyzes the conversion of dethiobiotin (DTB) to biotin by the insertion of a sulfur atom into dethiobiotin via a radical-based mechanism. The protein is Biotin synthase of Helicobacter pylori (strain G27).